A 79-amino-acid polypeptide reads, in one-letter code: Succinate dehydrogenase assembly factor 1, mitochondrial (79 aa).

It belongs to the complex I LYR family. SDHAF1 subfamily. Interacts with sdh2 within an sdh1-sdh2 subcomplex.

It is found in the mitochondrion matrix. Plays an essential role in the assembly of succinate dehydrogenase (SDH), an enzyme complex (also referred to as respiratory complex II) that is a component of both the tricarboxylic acid (TCA) cycle and the mitochondrial electron transport chain, and which couples the oxidation of succinate to fumarate with the reduction of ubiquinone (coenzyme Q) to ubiquinol. Promotes maturation of the iron-sulfur protein subunit sdh2 of the SDH catalytic dimer, protecting it from the deleterious effects of oxidants. May act together with SDHAF3. In Schizosaccharomyces pombe (strain 972 / ATCC 24843) (Fission yeast), this protein is Succinate dehydrogenase assembly factor 1, mitochondrial.